The sequence spans 194 residues: MRLCDTDIERYLDEGIIEITPRPGNEKINGATIDLRLGNSFRVFRDYSAPYIDVSGPREEVSAQLDRVMSDEIIIRDDEPFFLHPGVLALATTLESVRLPDNIIGWLDGRSSLARLGLMVHVTAHRIDPGWEGRIVLEFYNSGKLPLALRPNMIIGALSFEILSNHAARPYNRRRDAKYKNQQSAVASRINQDE.

Residues 110–115 (RSSLAR), D128, 136–138 (VLE), Y171, K178, and Q182 contribute to the dCTP site. E138 functions as the Proton donor/acceptor in the catalytic mechanism.

Belongs to the dCTP deaminase family. As to quaternary structure, homotrimer.

It catalyses the reaction dCTP + H2O + H(+) = dUTP + NH4(+). It functions in the pathway pyrimidine metabolism; dUMP biosynthesis; dUMP from dCTP (dUTP route): step 1/2. Its function is as follows. Catalyzes the deamination of dCTP to dUTP. This Mannheimia succiniciproducens (strain KCTC 0769BP / MBEL55E) protein is dCTP deaminase.